Consider the following 633-residue polypeptide: MTAPHETMSFQAEVKQLLHLMIHSLYSNKEIFLRELVSNASDATDKLRFEAIANPSLLENDADLAIRIEADAKARTLKITDNGIGMSRDEAIRNLGTIARSGTKEFFQQLSGDQQKDAALIGQFGVGFYSAFIVADKVTVETRRAGLGAEEAVRWESTGDGEFTVDAIARAERGTTITLHLREGEDDFLSAWRLKSIIQKYSDHISLPIRMPKEVWDAEASTYKRTDEWESVNQASALWTRAKSDITDEQYTAFYQHIAHDNEAPLAWTHNRVEGRSEYTQLLYIPARAPFDLWDRNHKAGLKLYVKRVFIMDDAEQLLPGYLRWVKGVVDSADLPLNVSRELLQESRDVKAIREGCTKRVLSMLETLADSEDEAERAKYATFWQQFGQALKEGVGEDQANQERVAKLLRFASTHNDTAEQNVALAAYVGRMKEGQDKIYYVTADTWSAAKNSPHLEVFRKKGIEVLLLTDRVDEWMLSYLREFDGKELVSVARGDLDLGKLADEAEKAEQEKAEADWKDVIERARAVLAGKAKDVRVTLRLTESASCLVSDEGDMSGYLQRLLKQAGQKAPDAQPILELNPEHALVKKLRDLPEGEAFSDRLQVLFDQALLAEGGMLEDPAAYVQRVNKLLA.

The segment at 1–341 (MTAPHETMSF…SADLPLNVSR (341 aa)) is a; substrate-binding. A b region spans residues 342–562 (ELLQESRDVK…EGDMSGYLQR (221 aa)). The tract at residues 563 to 633 (LLKQAGQKAP…YVQRVNKLLA (71 aa)) is c.

It belongs to the heat shock protein 90 family. As to quaternary structure, homodimer.

It localises to the cytoplasm. In terms of biological role, molecular chaperone. Has ATPase activity. The sequence is that of Chaperone protein HtpG from Cupriavidus taiwanensis (strain DSM 17343 / BCRC 17206 / CCUG 44338 / CIP 107171 / LMG 19424 / R1) (Ralstonia taiwanensis (strain LMG 19424)).